The sequence spans 175 residues: RNA pyrophosphohydrolase (175 aa).

Positions 7–150 (GYRLNVGIIL…KRQVYIQALK (144 aa)) constitute a Nudix hydrolase domain. Positions 39-60 (GGLAPGETAMQAMYRELHEEVG) match the Nudix box motif.

The protein belongs to the Nudix hydrolase family. RppH subfamily. A divalent metal cation serves as cofactor.

In terms of biological role, accelerates the degradation of transcripts by removing pyrophosphate from the 5'-end of triphosphorylated RNA, leading to a more labile monophosphorylated state that can stimulate subsequent ribonuclease cleavage. This is RNA pyrophosphohydrolase from Legionella pneumophila (strain Paris).